The following is a 409-amino-acid chain: tRNA(Met) cytidine acetate ligase (409 aa).

ATP contacts are provided by residues 7–20, Gly102, Asn169, and Arg194; that span reads VVEYNPMHNGHLYH.

The protein belongs to the TmcAL family.

It is found in the cytoplasm. The catalysed reaction is cytidine(34) in elongator tRNA(Met) + acetate + ATP = N(4)-acetylcytidine(34) in elongator tRNA(Met) + AMP + diphosphate. Catalyzes the formation of N(4)-acetylcytidine (ac(4)C) at the wobble position of elongator tRNA(Met), using acetate and ATP as substrates. First activates an acetate ion to form acetyladenylate (Ac-AMP) and then transfers the acetyl group to tRNA to form ac(4)C34. This is tRNA(Met) cytidine acetate ligase from Clostridium botulinum (strain Langeland / NCTC 10281 / Type F).